A 514-amino-acid polypeptide reads, in one-letter code: Peptide chain release factor 3 (514 aa).

Positions 8–268 (KKRRTFAIIS…TFLKFAPEPH (261 aa)) constitute a tr-type G domain. Residues 17–24 (SHPDAGKT), 85–89 (DTPGH), and 139–142 (NKLD) each bind GTP.

Belongs to the TRAFAC class translation factor GTPase superfamily. Classic translation factor GTPase family. PrfC subfamily.

It localises to the cytoplasm. Its function is as follows. Increases the formation of ribosomal termination complexes and stimulates activities of RF-1 and RF-2. It binds guanine nucleotides and has strong preference for UGA stop codons. It may interact directly with the ribosome. The stimulation of RF-1 and RF-2 is significantly reduced by GTP and GDP, but not by GMP. The chain is Peptide chain release factor 3 from Streptococcus pneumoniae serotype 19F (strain G54).